Consider the following 908-residue polypeptide: AdoMet-dependent rRNA methyltransferase SPB1 (908 aa).

S-adenosyl-L-methionine is bound by residues Gly-57, Trp-59, Asp-77, Asp-93, and Asp-118. Lys-158 serves as the catalytic Proton acceptor. The stretch at 378-422 (MDEEEQITEELQKLQQAKLAKTKRERKRANEKKARELLKLQLNMT) forms a coiled coil. 3 disordered regions span residues 440–513 (IFDL…YDSY), 535–715 (NFDA…DEVK), and 806–841 (AKGRKKMKAVARMEKAKKKADGVMESEEMGDGEKAR). Acidic residues predominate over residues 464 to 493 (DDGEGMDLASESEEEEDEDEEDDEVLDSDE). Residues 535–545 (NFDAWHGIQEK) are compositionally biased toward basic and acidic residues. 2 stretches are compositionally biased toward acidic residues: residues 546–564 (SDEEGSDDDDGQDDDEEGG) and 579–591 (DSSDSDSDAEPET). Positions 592-610 (EVPKKIKKVSFEKPARSEK) are enriched in basic and acidic residues. Acidic residues-rich tracts occupy residues 650–678 (DGDDEEEEEEDESEEEESDDEDVDMEDAS) and 685–712 (EGDDDFEIVPQAPEDDGPEWDVDDEDQD). Basic and acidic residues predominate over residues 816–827 (ARMEKAKKKADG).

The protein belongs to the class I-like SAM-binding methyltransferase superfamily. RNA methyltransferase RlmE family. SPB1 subfamily. In terms of assembly, component of the nucleolar and nucleoplasmic pre-60S ribosomal particle.

It is found in the nucleus. Its subcellular location is the nucleolus. The enzyme catalyses a ribonucleotide in rRNA + S-adenosyl-L-methionine = a 2'-O-methylribonucleotide in rRNA + S-adenosyl-L-homocysteine + H(+). In terms of biological role, required for proper assembly of pre-ribosomal particles during the biogenesis of the 60S ribosomal subunit. The polypeptide is AdoMet-dependent rRNA methyltransferase SPB1 (Cryptococcus neoformans var. neoformans serotype D (strain B-3501A) (Filobasidiella neoformans)).